Here is a 558-residue protein sequence, read N- to C-terminus: MRRKNRLFILVVLLGIVLVVYYSQLNSLDLVEPVQSSSSGNGGCWSYYEGLTPGWLNDFYDVNQITPNPAKDVIELVTRIKIFFNCLQQVDGHNIQRLRDIEKKLFPYINFEKLETDESAFWHTTTRWNGEVYHASMLEFDPKNHQFLRSKPINFDTGLSFWENWLHTVTQSGSKGIVISASDVQLNETIRLLKVLRFIKNDYPIQIVHNADLSQDSMKSIIKYARSLDTAEYPAQELWFLNVHSLLNPKYSKKFTTYSNKWLALTFSSFEIPILMDSDTVPFVSIEKFYELEEFQKTGVLFFKDRVISDDLFESSELKILREIVYGCIGLDLEDESKIHEQVEDPVVAQVLENMFIKKYKHHLESGLVILHKGKHLFSMLTSIALQFSPIAEYFHGDKDFFWLGELLSNNRFTFHPVDASNIGQLGNVVSKESTGEFYQICSVQLSHTDRDGSLLWLNGGLNICKKTSWEYDYEHRQRLNDMFQNADELREYYASPVKLEGIIIPDTSISGWINSGECFLFNYCTLFKEGEFGKLIKFKEDEKLRLSQIVDIWNKDI.

Topologically, residues 1 to 6 (MRRKNR) are cytoplasmic. A helical; Signal-anchor for type II membrane protein transmembrane segment spans residues 7–27 (LFILVVLLGIVLVVYYSQLNS). Topologically, residues 28–558 (LDLVEPVQSS…QIVDIWNKDI (531 aa)) are lumenal. A glycan (N-linked (GlcNAc...) asparagine) is linked at Asn187.

It belongs to the MNN1/MNT family.

The protein localises to the golgi apparatus membrane. It participates in protein modification; protein glycosylation. Its function is as follows. Mannosyltransferase involved in adding the 4th and 5th mannose residues of O-linked glycans. This Saccharomyces cerevisiae (strain ATCC 204508 / S288c) (Baker's yeast) protein is Alpha-1,3-mannosyltransferase MNT2 (MNT2).